The chain runs to 88 residues: Stannin (88 aa).

The Mitochondrial intermembrane portion of the chain corresponds to 1–10 (MSIMDHSPTT). The helical transmembrane segment at 11-31 (GVVTVIVILIAIAALGALILG) threads the bilayer. Topologically, residues 32 to 88 (CWCYLRLQRISQSEDEESIVGDGETKEPFLLVQYSAKGPCVERKAKLMTANSPEVHG) are cytoplasmic. Residues S49 and S83 each carry the phosphoserine modification.

Belongs to the stannin family. Monomer.

It localises to the mitochondrion outer membrane. Its function is as follows. Plays a role in the toxic effects of organotins. Plays a role in endosomal maturation. In Mus musculus (Mouse), this protein is Stannin (Snn).